The primary structure comprises 396 residues: Pyruvate dehydrogenase E1 component subunit alpha type I, mitochondrial (396 aa).

A mitochondrion-targeting transit peptide spans 1–25 (MIFVFANIFKVPTVSPSVMAISVRL). The pyruvate site is built by His-88, Tyr-114, Arg-115, Gly-153, Gly-161, Val-163, Asp-192, Gly-193, Ala-194, Asn-221, and Tyr-223. 2 residues coordinate thiamine diphosphate: Tyr-114 and Arg-115. Thiamine diphosphate-binding residues include Gly-161, Val-163, Asp-192, Gly-193, Ala-194, and Asn-221. Asp-192 provides a ligand contact to Mg(2+). 2 residues coordinate Mg(2+): Asn-221 and Tyr-223. His-288 is a binding site for thiamine diphosphate. Residues Ser-289 and Ser-296 each carry the phosphoserine modification.

In terms of assembly, heterotetramer of two PDHA1 and two PDHB subunits. The heterotetramer interacts with DLAT, and is part of the multimeric pyruvate dehydrogenase complex that contains multiple copies of pyruvate dehydrogenase (E1), dihydrolipoamide acetyltransferase (DLAT, E2) and lipoamide dehydrogenase (DLD, E3). Thiamine diphosphate serves as cofactor. The cofactor is Mg(2+).

It is found in the mitochondrion matrix. The catalysed reaction is N(6)-[(R)-lipoyl]-L-lysyl-[protein] + pyruvate + H(+) = N(6)-[(R)-S(8)-acetyldihydrolipoyl]-L-lysyl-[protein] + CO2. Pyruvate dehydrogenase activity is inhibited by phosphorylation of PDHA1; it is reactivated by dephosphorylation. Its function is as follows. The pyruvate dehydrogenase complex catalyzes the overall conversion of pyruvate to acetyl-CoA and CO(2), and thereby links the glycolytic pathway to the tricarboxylic cycle. The polypeptide is Pyruvate dehydrogenase E1 component subunit alpha type I, mitochondrial (Ascaris suum (Pig roundworm)).